The chain runs to 26 residues: uncharacterized protein (26 aa).

Post-translationally, phosphorylated by YfhK.

Functionally, probable member of a two-component regulatory system YfhA/YfhK. This is an uncharacterized protein from Klebsiella oxytoca.